A 542-amino-acid chain; its full sequence is Doublesex- and mab-3-related transcription factor A2 (542 aa).

The segment at residues 70–117 (CARCRNHGVVSALKGHKRYCRWKDCLCAKCTLIAERQRVMAAQVALRR) is a DNA-binding region (DM). Residues 201–316 (LQAGRPGSPL…GGSGPRQRTP (116 aa)) are disordered. In terms of domain architecture, DMA spans 314-349 (RTPLDILTRVFPGHRRGVLELVLQGCGGDVVQAIEQ).

It belongs to the DMRT family. In terms of tissue distribution, expressed in testis.

It is found in the nucleus. Functionally, may be involved in sexual development. This chain is Doublesex- and mab-3-related transcription factor A2 (DMRTA2), found in Homo sapiens (Human).